The sequence spans 150 residues: Large ribosomal subunit protein bL9 (150 aa).

It belongs to the bacterial ribosomal protein bL9 family.

In terms of biological role, binds to the 23S rRNA. The chain is Large ribosomal subunit protein bL9 from Burkholderia cenocepacia (strain HI2424).